The following is a 248-amino-acid chain: Transcription factor cicD (248 aa).

Basic and acidic residues predominate over residues 1–22; sequence MVGSRHPDQCAKRWHHSLDPNV. The interval 1–25 is disordered; that stretch reads MVGSRHPDQCAKRWHHSLDPNVKRG. Residues 19 to 74 form the HTH myb-type domain; the sequence is DPNVKRGPWTMEEDSSLLEAVQKIGRDWKEIGRELFPSRSTTDIKNRYVILSRRRG. A DNA-binding region (H-T-H motif) is located at residues 46-70; it reads WKEIGRELFPSRSTTDIKNRYVILS. The segment at 186–208 is disordered; that stretch reads SELEGSFTSRNHEEPPQPLPVPD.

The protein resides in the nucleus. Transcription factor that regulates the expression of the gene cluster that mediates the biosynthesis of cichorine, a phytotoxin active against knapweed, corn, and soybeans. This is Transcription factor cicD from Emericella nidulans (strain FGSC A4 / ATCC 38163 / CBS 112.46 / NRRL 194 / M139) (Aspergillus nidulans).